The sequence spans 445 residues: Xylose isomerase (445 aa).

Residues His107 and Asp110 contribute to the active site. Positions 238, 274, 277, 302, 313, 315, and 345 each coordinate Mg(2+).

Belongs to the xylose isomerase family. As to quaternary structure, homotetramer. Mg(2+) serves as cofactor.

Its subcellular location is the cytoplasm. The enzyme catalyses alpha-D-xylose = alpha-D-xylulofuranose. The chain is Xylose isomerase (xylA) from Priestia megaterium (strain DSM 319 / IMG 1521) (Bacillus megaterium).